Reading from the N-terminus, the 434-residue chain is Probable phosphoglucosamine mutase (434 aa).

Catalysis depends on Ser-91, which acts as the Phosphoserine intermediate. Mg(2+)-binding residues include Ser-91, Asp-229, Asp-231, and Asp-233. Ser-91 bears the Phosphoserine mark.

This sequence belongs to the phosphohexose mutase family. Mg(2+) is required as a cofactor. Post-translationally, activated by phosphorylation.

The enzyme catalyses alpha-D-glucosamine 1-phosphate = D-glucosamine 6-phosphate. Catalyzes the conversion of glucosamine-6-phosphate to glucosamine-1-phosphate. The chain is Probable phosphoglucosamine mutase from Methanosarcina barkeri (strain Fusaro / DSM 804).